The sequence spans 358 residues: Membrane-bound lytic murein transglycosylase C (358 aa).

An N-terminal signal peptide occupies residues 1–16 (MKKILALLVIAPLLIS). Cys17 carries the N-palmitoyl cysteine lipid modification. Cys17 carries the S-diacylglycerol cysteine lipid modification.

This sequence belongs to the transglycosylase Slt family.

The protein resides in the cell outer membrane. The enzyme catalyses Exolytic cleavage of the (1-&gt;4)-beta-glycosidic linkage between N-acetylmuramic acid (MurNAc) and N-acetylglucosamine (GlcNAc) residues in peptidoglycan, from either the reducing or the non-reducing ends of the peptidoglycan chains, with concomitant formation of a 1,6-anhydrobond in the MurNAc residue.. Its function is as follows. Murein-degrading enzyme. May play a role in recycling of muropeptides during cell elongation and/or cell division. The polypeptide is Membrane-bound lytic murein transglycosylase C (Serratia proteamaculans (strain 568)).